Consider the following 368-residue polypeptide: Glycine betaine monooxygenase reductase subunit (368 aa).

One can recognise an FAD-binding FR-type domain in the interval 16–119 (NGRHNVRCVK…HGPVGDFNVI (104 aa)). A 2Fe-2S ferredoxin-type domain is found at 284–368 (LQVEFSNSGK…TPKSHVAIEF (85 aa)). [2Fe-2S] cluster is bound by residues Cys318, Cys323, Cys326, and Cys356.

It in the N-terminal section; belongs to the FAD-binding oxidoreductase type 6 family. As to quaternary structure, monomer. The system is composed of an oxygenase subunit (BmoA) and a reductase subunit (BmoB). Maximal specific activity is obtained when the ratio of BmoA to BmoB is 5:1. The cofactor is FAD. [2Fe-2S] cluster serves as cofactor.

It catalyses the reaction glycine betaine + NADH + O2 + H(+) = N,N-dimethylglycine + formaldehyde + NAD(+) + H2O. Its function is as follows. Involved in degradation of glycine betaine. Part of a Rieske-type oxygenase system that catalyzes the conversion of glycine betaine (GB) to dimethylglycine (DMG). This subunit is the ferredoxin reductase component of the system. NADH is the preferred electron donor. This chain is Glycine betaine monooxygenase reductase subunit, found in Chromohalobacter salexigens (strain ATCC BAA-138 / DSM 3043 / CIP 106854 / NCIMB 13768 / 1H11).